A 410-amino-acid chain; its full sequence is Serine hydroxymethyltransferase (410 aa).

Residues L116 and 120–122 (GHL) contribute to the (6S)-5,6,7,8-tetrahydrofolate site. N6-(pyridoxal phosphate)lysine is present on K225. A (6S)-5,6,7,8-tetrahydrofolate-binding site is contributed by 349 to 351 (SPF).

This sequence belongs to the SHMT family. In terms of assembly, homodimer. It depends on pyridoxal 5'-phosphate as a cofactor.

Its subcellular location is the cytoplasm. It carries out the reaction (6R)-5,10-methylene-5,6,7,8-tetrahydrofolate + glycine + H2O = (6S)-5,6,7,8-tetrahydrofolate + L-serine. The protein operates within one-carbon metabolism; tetrahydrofolate interconversion. Its pathway is amino-acid biosynthesis; glycine biosynthesis; glycine from L-serine: step 1/1. Functionally, catalyzes the reversible interconversion of serine and glycine with tetrahydrofolate (THF) serving as the one-carbon carrier. This reaction serves as the major source of one-carbon groups required for the biosynthesis of purines, thymidylate, methionine, and other important biomolecules. Also exhibits THF-independent aldolase activity toward beta-hydroxyamino acids, producing glycine and aldehydes, via a retro-aldol mechanism. The sequence is that of Serine hydroxymethyltransferase from Leuconostoc mesenteroides subsp. mesenteroides (strain ATCC 8293 / DSM 20343 / BCRC 11652 / CCM 1803 / JCM 6124 / NCDO 523 / NBRC 100496 / NCIMB 8023 / NCTC 12954 / NRRL B-1118 / 37Y).